A 313-amino-acid chain; its full sequence is Probable cell division protein WhiA (313 aa).

Residues 277 to 311 (SLKEVAAQVPDGPISKSGVNHRFQKIREMAQQLKE) constitute a DNA-binding region (H-T-H motif).

It belongs to the WhiA family.

Its function is as follows. Involved in cell division and chromosome segregation. The polypeptide is Probable cell division protein WhiA (Lactobacillus gasseri (strain ATCC 33323 / DSM 20243 / BCRC 14619 / CIP 102991 / JCM 1131 / KCTC 3163 / NCIMB 11718 / NCTC 13722 / AM63)).